Reading from the N-terminus, the 281-residue chain is Tryptophan synthase alpha chain (281 aa).

Active-site proton acceptor residues include glutamate 49 and aspartate 60.

The protein belongs to the TrpA family. Tetramer of two alpha and two beta chains.

It catalyses the reaction (1S,2R)-1-C-(indol-3-yl)glycerol 3-phosphate + L-serine = D-glyceraldehyde 3-phosphate + L-tryptophan + H2O. It functions in the pathway amino-acid biosynthesis; L-tryptophan biosynthesis; L-tryptophan from chorismate: step 5/5. In terms of biological role, the alpha subunit is responsible for the aldol cleavage of indoleglycerol phosphate to indole and glyceraldehyde 3-phosphate. The chain is Tryptophan synthase alpha chain from Methanocaldococcus jannaschii (strain ATCC 43067 / DSM 2661 / JAL-1 / JCM 10045 / NBRC 100440) (Methanococcus jannaschii).